The following is a 401-amino-acid chain: Imidazolonepropionase (401 aa).

H70 and H72 together coordinate Fe(3+). Residues H70 and H72 each coordinate Zn(2+). The 4-imidazolone-5-propanoate site is built by R79, Y142, and H175. Y142 serves as a coordination point for N-formimidoyl-L-glutamate. H238 is a binding site for Fe(3+). Residue H238 participates in Zn(2+) binding. Q241 contributes to the 4-imidazolone-5-propanoate binding site. Residue D313 coordinates Fe(3+). D313 provides a ligand contact to Zn(2+). Residues N315 and G317 each contribute to the N-formimidoyl-L-glutamate site. A 4-imidazolone-5-propanoate-binding site is contributed by T318.

The protein belongs to the metallo-dependent hydrolases superfamily. HutI family. Requires Zn(2+) as cofactor. The cofactor is Fe(3+).

The protein localises to the cytoplasm. The enzyme catalyses 4-imidazolone-5-propanoate + H2O = N-formimidoyl-L-glutamate. Its pathway is amino-acid degradation; L-histidine degradation into L-glutamate; N-formimidoyl-L-glutamate from L-histidine: step 3/3. Catalyzes the hydrolytic cleavage of the carbon-nitrogen bond in imidazolone-5-propanoate to yield N-formimidoyl-L-glutamate. It is the third step in the universal histidine degradation pathway. The chain is Imidazolonepropionase from Xanthomonas axonopodis pv. citri (strain 306).